We begin with the raw amino-acid sequence, 290 residues long: Agglutinin-2 (290 aa).

An N-terminal signal peptide occupies residues 1–35 (MAISNTNLLQTKKPISLPLLAFITLFLMLLNRVNS). N-linked (GlcNAc...) asparagine glycosylation occurs at asparagine 155. Residues glutamate 165 and aspartate 167 each coordinate Mn(2+). Aspartate 167, asparagine 171, and aspartate 175 together coordinate Ca(2+). 2 residues coordinate Mn(2+): aspartate 175 and histidine 180. Asparagine 200 carries an N-linked (GlcNAc...) asparagine glycan.

This sequence belongs to the leguminous lectin family. In terms of assembly, homotetramer.

Its function is as follows. Mannose/glucose binding bark lectin. In terms of biological role, bark lectins are storage proteins that probably maintain stocks of nitrogen during dormant period. Self-aggregatable molecules that can bind their own carbohydrate side chains. They could also play a role in the plant's defense against phytophagous invertebrates or herbivorous higher animals. The chain is Agglutinin-2 from Cladrastis kentukea (Yellow wood).